The following is a 304-amino-acid chain: Recombination-associated protein RdgC (304 aa).

The protein belongs to the RdgC family.

Its subcellular location is the cytoplasm. It is found in the nucleoid. Its function is as follows. May be involved in recombination. The protein is Recombination-associated protein RdgC of Shewanella oneidensis (strain ATCC 700550 / JCM 31522 / CIP 106686 / LMG 19005 / NCIMB 14063 / MR-1).